The chain runs to 331 residues: MVRLILEHTLQGHKGRIWGVAWHPKGNSFASCGEDKAIRIWSLSGNTWTTKTILSDGHKRTIREVRWSPCGEYLASASFDATTAIWSKHECTATLEGHENEVKSVSWSRSGGLLATCSRDKSVWIWEVAGDDEFECAAVLNAHSQDVKRVVWHPTKEVLASASYDNTIKMFAESALDSDWDCTATLSSHTSTVWSIDFDADGERLVSCSDDATLKIWRAYHPGNDAGIATPDKTTVWKCVCTLSGEHSRAIYDVSWCKQTGLIASACGDDGIRIFKECSDSKRDAPTFELLTAEESAHEQDVNAVEWNPVTAGQLISCSDDGTIKIWKLQE.

WD repeat units follow at residues 12–51 (GHKG…WTTK), 57–96 (GHKR…ATLE), 97–136 (GHEN…EFEC), 142–181 (AHSQ…SDWD), 188–227 (SHTS…NDAG), 246–285 (EHSR…KRDA), and 297–331 (AHEQ…KLQE).

It belongs to the WD repeat CIA1 family.

Essential component of the cytosolic iron-sulfur (Fe/S) protein assembly machinery. Required for the maturation of extramitochondrial Fe/S proteins. The polypeptide is Probable cytosolic iron-sulfur protein assembly protein Ciao1 (Drosophila virilis (Fruit fly)).